Consider the following 510-residue polypeptide: 2,3-bisphosphoglycerate-independent phosphoglycerate mutase (510 aa).

Aspartate 12 contributes to the Mn(2+) binding site. Tyrosine 36 is subject to Phosphotyrosine. Serine 62 lines the Mn(2+) pocket. Serine 62 serves as the catalytic Phosphoserine intermediate. Residues histidine 123, 153–154, arginine 185, arginine 191, 261–264, and lysine 336 contribute to the substrate site; these read RD and RPDR. Mn(2+) is bound by residues aspartate 403, histidine 407, aspartate 444, histidine 445, and histidine 462.

It belongs to the BPG-independent phosphoglycerate mutase family. As to quaternary structure, monomer. It depends on Mn(2+) as a cofactor.

The catalysed reaction is (2R)-2-phosphoglycerate = (2R)-3-phosphoglycerate. It participates in carbohydrate degradation; glycolysis; pyruvate from D-glyceraldehyde 3-phosphate: step 3/5. In terms of biological role, essential for rapid growth and for sporulation. Catalyzes the interconversion of 2-phosphoglycerate and 3-phosphoglycerate. This Shouchella clausii (strain KSM-K16) (Alkalihalobacillus clausii) protein is 2,3-bisphosphoglycerate-independent phosphoglycerate mutase.